Here is a 387-residue protein sequence, read N- to C-terminus: Formate-dependent phosphoribosylglycinamide formyltransferase (387 aa).

N(1)-(5-phospho-beta-D-ribosyl)glycinamide contacts are provided by residues 12-13 (EL) and E72. ATP is bound by residues R104, K145, 150–155 (SSGKGQ), 185–188 (EEFI), and E193. One can recognise an ATP-grasp domain in the interval 109–300 (DLAARELGLA…EFELHLRAVL (192 aa)). Mg(2+) contacts are provided by E258 and E270. Residues D277, K347, and 354 to 355 (RR) each bind N(1)-(5-phospho-beta-D-ribosyl)glycinamide.

It belongs to the PurK/PurT family. Homodimer.

It carries out the reaction N(1)-(5-phospho-beta-D-ribosyl)glycinamide + formate + ATP = N(2)-formyl-N(1)-(5-phospho-beta-D-ribosyl)glycinamide + ADP + phosphate + H(+). It functions in the pathway purine metabolism; IMP biosynthesis via de novo pathway; N(2)-formyl-N(1)-(5-phospho-D-ribosyl)glycinamide from N(1)-(5-phospho-D-ribosyl)glycinamide (formate route): step 1/1. Its function is as follows. Involved in the de novo purine biosynthesis. Catalyzes the transfer of formate to 5-phospho-ribosyl-glycinamide (GAR), producing 5-phospho-ribosyl-N-formylglycinamide (FGAR). Formate is provided by PurU via hydrolysis of 10-formyl-tetrahydrofolate. The sequence is that of Formate-dependent phosphoribosylglycinamide formyltransferase from Anaeromyxobacter dehalogenans (strain 2CP-C).